A 454-amino-acid chain; its full sequence is NADP-specific glutamate dehydrogenase (454 aa).

The residue at position 2 (serine 2) is an N-acetylserine. The active site involves lysine 114.

It belongs to the Glu/Leu/Phe/Val dehydrogenases family. In terms of assembly, homohexamer.

The catalysed reaction is L-glutamate + NADP(+) + H2O = 2-oxoglutarate + NH4(+) + NADPH + H(+). This is NADP-specific glutamate dehydrogenase (gdh) from Neurospora crassa (strain ATCC 24698 / 74-OR23-1A / CBS 708.71 / DSM 1257 / FGSC 987).